A 490-amino-acid chain; its full sequence is Aspartyl/glutamyl-tRNA(Asn/Gln) amidotransferase subunit B (490 aa).

Belongs to the GatB/GatE family. GatB subfamily. As to quaternary structure, heterotrimer of A, B and C subunits.

The catalysed reaction is L-glutamyl-tRNA(Gln) + L-glutamine + ATP + H2O = L-glutaminyl-tRNA(Gln) + L-glutamate + ADP + phosphate + H(+). The enzyme catalyses L-aspartyl-tRNA(Asn) + L-glutamine + ATP + H2O = L-asparaginyl-tRNA(Asn) + L-glutamate + ADP + phosphate + 2 H(+). In terms of biological role, allows the formation of correctly charged Asn-tRNA(Asn) or Gln-tRNA(Gln) through the transamidation of misacylated Asp-tRNA(Asn) or Glu-tRNA(Gln) in organisms which lack either or both of asparaginyl-tRNA or glutaminyl-tRNA synthetases. The reaction takes place in the presence of glutamine and ATP through an activated phospho-Asp-tRNA(Asn) or phospho-Glu-tRNA(Gln). This chain is Aspartyl/glutamyl-tRNA(Asn/Gln) amidotransferase subunit B, found in Burkholderia ambifaria (strain MC40-6).